Consider the following 431-residue polypeptide: Histidine--tRNA ligase (431 aa).

This sequence belongs to the class-II aminoacyl-tRNA synthetase family.

It is found in the cytoplasm. The catalysed reaction is tRNA(His) + L-histidine + ATP = L-histidyl-tRNA(His) + AMP + diphosphate + H(+). This is Histidine--tRNA ligase (hisS) from Pyrococcus horikoshii (strain ATCC 700860 / DSM 12428 / JCM 9974 / NBRC 100139 / OT-3).